Consider the following 206-residue polypeptide: Imidazoleglycerol-phosphate dehydratase (206 aa).

The interval 1-21 (MTTPSTAPTPAPRKAEVSRNT) is disordered.

The protein belongs to the imidazoleglycerol-phosphate dehydratase family.

Its subcellular location is the cytoplasm. The enzyme catalyses D-erythro-1-(imidazol-4-yl)glycerol 3-phosphate = 3-(imidazol-4-yl)-2-oxopropyl phosphate + H2O. It functions in the pathway amino-acid biosynthesis; L-histidine biosynthesis; L-histidine from 5-phospho-alpha-D-ribose 1-diphosphate: step 6/9. In Polaromonas sp. (strain JS666 / ATCC BAA-500), this protein is Imidazoleglycerol-phosphate dehydratase.